Consider the following 1421-residue polypeptide: ALK tyrosine kinase receptor homolog scd-2 (1421 aa).

An N-terminal signal peptide occupies residues 1 to 20; the sequence is MRKRRLWWFVVLFRVTLVGA. The Extracellular segment spans residues 21 to 903; it reads ILPNETFDVR…DTCEEIQIWT (883 aa). N-linked (GlcNAc...) asparagine glycosylation is found at asparagine 24, asparagine 44, asparagine 70, asparagine 83, asparagine 119, and asparagine 201. An LDL-receptor class A domain is found at 300 to 338; it reads QCSRGDQFLCSISANTRCLQNAQCDSRIDCDDESDEMDC. Intrachain disulfides connect cysteine 301/cysteine 317, cysteine 309/cysteine 329, and cysteine 323/cysteine 338. Residues 339-542 enclose the MAM domain; that stretch reads GNINGTMCDF…NLSFSPTCFE (204 aa). Residues asparagine 342, asparagine 362, asparagine 495, asparagine 533, asparagine 546, asparagine 633, asparagine 726, asparagine 793, asparagine 849, asparagine 873, and asparagine 893 are each glycosylated (N-linked (GlcNAc...) asparagine). The helical transmembrane segment at 904–924 threads the bilayer; it reads LYNITFLIFAALTIIGALFVV. The Cytoplasmic segment spans residues 925 to 1421; the sequence is YHYRNREKQM…SVPLLECQTR (497 aa). One can recognise a Protein kinase domain in the interval 976–1261; the sequence is IERGRVLGRG…GMPFPIHPAV (286 aa). Residues 982–990 and lysine 1003 each bind ATP; that span reads LGRGNFGEV. Residue aspartate 1106 is the Proton acceptor of the active site.

This sequence belongs to the protein kinase superfamily. Tyr protein kinase family. Insulin receptor subfamily. In terms of assembly, interacts (via cytoplasmic domain) with fsn-1 (via SPRY domain). Expressed in AIA sensory neurons.

It is found in the cell membrane. The enzyme catalyses L-tyrosyl-[protein] + ATP = O-phospho-L-tyrosyl-[protein] + ADP + H(+). Functionally, probable tyrosine-protein kinase receptor which regulates the dauer/non-dauer developmental decision probably by controlling daf-3 transcriptional activity in parallel or together with the TGF-beta pathway. Regulates integration of conflicting sensory cues in AIA interneurons. May act as a receptor for hen-1. In AWA neurons, together with hen-1, plays a role in regulating olfactory adaptation by controlling the forgetting sensory responses to odorants such as diacetyl. This is ALK tyrosine kinase receptor homolog scd-2 from Caenorhabditis elegans.